A 260-amino-acid chain; its full sequence is Carbonic anhydrase (260 aa).

Residues 1–31 (MAHAWGYGPADGPESWAESFPIANGPRQSPI) form a disordered region. An Alpha-carbonic anhydrase domain is found at 3-259 (HAWGYGPADG…LKGRKVRASF (257 aa)). His64 serves as the catalytic Proton acceptor. Residues His94, His96, and His119 each contribute to the Zn(2+) site. Tyr127 is a catalytic residue. 198–199 (TT) contributes to the substrate binding site.

Belongs to the alpha-carbonic anhydrase family. Zn(2+) serves as cofactor.

It carries out the reaction hydrogencarbonate + H(+) = CO2 + H2O. Reversible hydration of carbon dioxide. In Danio rerio (Zebrafish), this protein is Carbonic anhydrase (cahz).